The primary structure comprises 218 residues: MKTKICGLKSLREIEIVNKYAPNYVGFVFAGVKRKIDEEVASLLRRELSSEIQAVGVFVNESIERIAKMCEKNTIQLVQLHGDEDRDYINALKLEVGAPIIKAVRAQSVEQILEALTLPCDYFLYDTYSEHSYGGEGKRFDETILTEVYKESSNNEFKKYLQKPYFIAGGLTAQNVRLLDSRLEPYGVDVSSGVESMGQKDEEKVKEFLFAAWRWNEN.

The protein belongs to the TrpF family.

The catalysed reaction is N-(5-phospho-beta-D-ribosyl)anthranilate = 1-(2-carboxyphenylamino)-1-deoxy-D-ribulose 5-phosphate. It functions in the pathway amino-acid biosynthesis; L-tryptophan biosynthesis; L-tryptophan from chorismate: step 3/5. The protein is N-(5'-phosphoribosyl)anthranilate isomerase of Lachnoclostridium phytofermentans (strain ATCC 700394 / DSM 18823 / ISDg) (Clostridium phytofermentans).